The primary structure comprises 1149 residues: FH2 domain-containing protein 1 (1149 aa).

Disordered stretches follow at residues 18–79, 464–540, 554–660, and 681–1149; these read LATA…PPPG, NHDR…SRLS, ESAT…PLLP, and SPKS…PLQK. Pro residues-rich tracts occupy residues 33 to 48 and 56 to 79; these read ASPPPPPPPPPPPPCP and PSPPPPLPPPLPGGPPIPPPPPPG. In terms of domain architecture, FH2 spans 88–483; sequence GYSSLGKKKR…QLQRQKEMEQ (396 aa). Basic and acidic residues predominate over residues 464-485; it reads NHDREEQERKQLQRQKEMEQKR. The segment covering 486 to 504 has biased composition (polar residues); that stretch reads YSWSTGELGSFGRSSSEND. Ser-501 carries the phosphoserine modification. Positions 522–532 are enriched in low complexity; the sequence is PRPNSPSYRPP. Polar residues-rich tracts occupy residues 554 to 575 and 591 to 604; these read ESATSSPEDPNKFNSLPRSSPR and SHGPNFTHEPQASK. Ser-645 and Ser-655 each carry phosphoserine. Over residues 681–693 the composition is skewed to polar residues; sequence SPKSLEEGSQLTL. Residues 784-795 are compositionally biased toward basic and acidic residues; sequence MDSRAGGDKQEE. Low complexity predominate over residues 801–822; the sequence is GSVSSGAGEAGSSQVSSNSVSS. The segment covering 844 to 856 has biased composition (basic and acidic residues); that stretch reads PKDRPSRGKDAIA. A compositionally biased stretch (polar residues) spans 926–947; the sequence is ETPSSTDTPLSRRSSVRGTSDT. The segment at 960-1086 is MTBD; microtubule-binding domain; that stretch reads EEPRLPRSSG…VKGGSEDSAS (127 aa). Residues 965 to 974 are compositionally biased toward low complexity; it reads PRSSGSISGR. Composition is skewed to polar residues over residues 1042–1052 and 1064–1074; these read ARNTVASSSRS and TGLTRTVSQRQ. Residues 1123–1134 are compositionally biased toward basic and acidic residues; it reads GTTERSSLRLKD.

As to quaternary structure, interacts with CEP170. In terms of tissue distribution, brain, heart and lung (at protein level).

Its subcellular location is the golgi apparatus. The protein resides in the cell projection. It localises to the cilium. Its function is as follows. Microtubule-associated formin which regulates both actin and microtubule dynamics. Induces microtubule acetylation and stabilization and actin stress fiber formation. Regulates Golgi ribbon formation. Required for normal cilia assembly. Early in cilia assembly, may assist in the maturation and positioning of the centrosome/basal body, and once cilia assembly has initiated, may also promote cilia elongation by inhibiting disassembly. The protein is FH2 domain-containing protein 1 (Fhdc1) of Mus musculus (Mouse).